The chain runs to 141 residues: Hemoglobin subunit alpha-A (141 aa).

In terms of domain architecture, Globin spans 1–141; sequence VLSGTDKTNV…VGAVLTAKYR (141 aa). Residue histidine 58 participates in O2 binding. Histidine 87 contributes to the heme b binding site.

The protein belongs to the globin family. Heterotetramer of two alpha chains and two beta chains. As to expression, red blood cells.

Its function is as follows. Involved in oxygen transport from the lung to the various peripheral tissues. The chain is Hemoglobin subunit alpha-A (HBAA) from Struthio camelus (Common ostrich).